We begin with the raw amino-acid sequence, 372 residues long: tRNA-specific 2-thiouridylase MnmA (372 aa).

ATP contacts are provided by residues 11-18 (GLSGGVDS) and Met-36. An interaction with target base in tRNA region spans residues 106–108 (NPD). Cys-111 serves as the catalytic Nucleophile. A disulfide bridge links Cys-111 with Cys-204. An ATP-binding site is contributed by Gly-136. Positions 154-156 (KDQ) are interaction with tRNA. Cys-204 functions as the Cysteine persulfide intermediate in the catalytic mechanism. The segment at 311-312 (RY) is interaction with tRNA.

Belongs to the MnmA/TRMU family.

It is found in the cytoplasm. The catalysed reaction is S-sulfanyl-L-cysteinyl-[protein] + uridine(34) in tRNA + AH2 + ATP = 2-thiouridine(34) in tRNA + L-cysteinyl-[protein] + A + AMP + diphosphate + H(+). Functionally, catalyzes the 2-thiolation of uridine at the wobble position (U34) of tRNA, leading to the formation of s(2)U34. The polypeptide is tRNA-specific 2-thiouridylase MnmA (Mycoplasmopsis synoviae (strain 53) (Mycoplasma synoviae)).